Reading from the N-terminus, the 545-residue chain is Metal transporter NRAT1 (545 aa).

Helical transmembrane passes span 51–71, 84–104, 128–148, 155–175, 188–208, 234–254, 278–298, 333–353, 373–395, 398–418, 437–457, and 474–494; these read FLAH…PSNL, ELLW…TLAA, IFLW…EVLG, ILLK…TLLL, FIIA…LSYL, IALF…ALVL, LAFI…GSIC, VVYA…CTFA, LITR…PSGA, LIIL…IPLL, VVIA…FLVW, and GLIS…VVYL. The disordered stretch occupies residues 516–545; that stretch reads EAGGTPVVDASAADEDQPAPYRKDLADASM. Positions 536 to 545 are enriched in basic and acidic residues; sequence YRKDLADASM.

This sequence belongs to the NRAMP (TC 2.A.55) family. In terms of tissue distribution, expressed at low levels in roots.

The protein resides in the cell membrane. Its function is as follows. Metal transporter that transports the trivalent cation aluminum (Al(3+)), but does not seem to transport divalent cations such as iron (Fe(2+)), manganese (Mg(2+)) or Cadmium (Cd(2+)). Involved in Al tolerance by taking up Al in root cells, where it is detoxified by chelation with organic acid anions and sequestration into the vacuoles. This chain is Metal transporter NRAT1 (NRAT1), found in Oryza sativa subsp. japonica (Rice).